The sequence spans 710 residues: Integrator complex subunit 10 (710 aa).

3 positions are modified to phosphoserine: Ser-231, Ser-381, and Ser-382. Residue Lys-464 forms a Glycyl lysine isopeptide (Lys-Gly) (interchain with G-Cter in SUMO2) linkage.

It belongs to the Integrator subunit 10 family. As to quaternary structure, component of the Integrator complex, composed of core subunits INTS1, INTS2, INTS3, INTS4, INTS5, INTS6, INTS7, INTS8, INTS9/RC74, INTS10, INTS11/CPSF3L, INTS12, INTS13, INTS14 and INTS15. The core complex associates with protein phosphatase 2A subunits PPP2CA and PPP2R1A, to form the Integrator-PP2A (INTAC) complex. INTS10 is part of the tail subcomplex, composed of INTS10, INTS13, INTS14 and INTS15.

It is found in the nucleus. Functionally, component of the integrator complex, a multiprotein complex that terminates RNA polymerase II (Pol II) transcription in the promoter-proximal region of genes. The integrator complex provides a quality checkpoint during transcription elongation by driving premature transcription termination of transcripts that are unfavorably configured for transcriptional elongation: the complex terminates transcription by (1) catalyzing dephosphorylation of the C-terminal domain (CTD) of Pol II subunit POLR2A/RPB1 and SUPT5H/SPT5, (2) degrading the exiting nascent RNA transcript via endonuclease activity and (3) promoting the release of Pol II from bound DNA. The integrator complex is also involved in terminating the synthesis of non-coding Pol II transcripts, such as enhancer RNAs (eRNAs), small nuclear RNAs (snRNAs), telomerase RNAs and long non-coding RNAs (lncRNAs). Within the integrator complex, INTS10 is part of the integrator tail module that acts as a platform for the recruitment of transcription factors at promoters. May be not involved in the recruitment of cytoplasmic dynein to the nuclear envelope, probably as component of the integrator complex. In Homo sapiens (Human), this protein is Integrator complex subunit 10.